The sequence spans 181 residues: Nucleoside triphosphate/diphosphate phosphatase (181 aa).

The active-site Proton donor is the Arg26. Asn90, Asp106, Asp108, Asp110, Asp123, and Glu126 together coordinate Mg(2+).

The protein belongs to the Ntdp family. The cofactor is Mg(2+).

The catalysed reaction is a ribonucleoside 5'-triphosphate + H2O = a ribonucleoside 5'-diphosphate + phosphate + H(+). It carries out the reaction a ribonucleoside 5'-diphosphate + H2O = a ribonucleoside 5'-phosphate + phosphate + H(+). In terms of biological role, has nucleoside phosphatase activity towards nucleoside triphosphates and nucleoside diphosphates. The sequence is that of Nucleoside triphosphate/diphosphate phosphatase from Staphylococcus carnosus (strain TM300).